A 701-amino-acid polypeptide reads, in one-letter code: Meprin A subunit beta (701 aa).

The N-terminal stretch at 1–22 is a signal peptide; sequence MDLWNLSWFLFLDALLVISGLA. Positions 23-61 are excised as a propeptide; the sequence is TPENFDVDGGMDQDIFDINEGLGLDLFEGDIRLDRAQIR. Residues 23–652 lie on the Extracellular side of the membrane; it reads TPENFDVDGG…CEKRGSTRDT (630 aa). Positions 62–256 constitute a Peptidase M12A domain; that stretch reads NSIIGEKYRW…LKLNQLYNCS (195 aa). 3 disulfide bridges follow: C103–C255, C124–C144, and C265–C427. Position 152 (H152) interacts with Zn(2+). Residue E153 is part of the active site. Positions 156 and 162 each coordinate Zn(2+). N-linked (GlcNAc...) asparagine glycosylation is found at N218, N254, N370, N421, N436, N445, N547, and N592. In terms of domain architecture, MAM spans 260-429; that stretch reads SFMDSCSFEL…INLSETRCPH (170 aa). Residues 430–585 enclose the MATH domain; it reads HIWHIRNFTQ…GDDVYILLTV (156 aa). Residue S593 is glycosylated (O-linked (GalNAc...) serine). O-linked (GalNAc...) threonine glycans are attached at residues T594 and T599. The segment at 595 to 607 is required for proteolytic processing; sequence QIQLTPAPSVQDL. Residue S603 is glycosylated (O-linked (GalNAc...) serine). Residues 604–644 form the EGF-like domain; sequence VQDLCSKTTCKNDGVCTVRDGKAECRCQSGEDWWYMGERCE. 3 disulfide bridges follow: C608–C619, C613–C628, and C630–C643. The helical transmembrane segment at 653–673 threads the bilayer; sequence IVIAVSSTVAVFALMLIITLV. At 674–701 the chain is on the cytoplasmic side; the sequence is SVYCTRKKYRERMSSNRPNLTPQNQHAF. At T694 the chain carries Phosphothreonine.

As to quaternary structure, homotetramer consisting of disulfide-linked beta subunits, or heterotetramer of two alpha and two beta subunits formed by non-covalent association of two disulfide-linked heterodimers. Interacts with MBL2 through its carbohydrate moiety. This interaction may inhibit its catalytic activity. Interacts with TSPAN8. Zn(2+) serves as cofactor. In terms of processing, phosphorylated by PKC at multiple sites of its cytoplasmic part. Phosphorylation dcreases activity at the cell surface, leading to diminished substrate cleavage. Post-translationally, N-glycosylated; contains high mannose and/or complex biantennary structures. O-glycosylation protect the C-terminal region from proteolytic cleavage and diminish secretion, this seems to be specific to human. In terms of processing, proteolytically activated by trypsin in the intestinal lumen and kallikrein-related peptidases in other tissues. As to expression, the major site of expression is the brush border membrane of small intestinal and kidney epithelial cells.

It is found in the cell membrane. The protein localises to the secreted. It catalyses the reaction Hydrolysis of proteins, including azocasein, and peptides. Hydrolysis of 5-His-|-Leu-6, 6-Leu-|-Cys-7, 14-Ala-|-Leu-15 and 19-Cys-|-Gly-20 bonds in insulin B chain.. Its activity is regulated as follows. Strongly inhibited by fetuin-A/AHSG. In terms of biological role, membrane metallopeptidase that sheds many membrane-bound proteins. Exhibits a strong preference for acidic amino acids at the P1' position. Known substrates include: FGF19, VGFA, IL1B, IL18, procollagen I and III, E-cadherin, KLK7, gastrin, ADAM10, tenascin-C. The presence of several pro-inflammatory cytokine among substrates implicate MEP1B in inflammation. It is also involved in tissue remodeling due to its capability to degrade extracellular matrix components. Also cleaves the amyloid precursor protein/APP, thereby releasing neurotoxic amyloid beta peptides. The sequence is that of Meprin A subunit beta (MEP1B) from Homo sapiens (Human).